A 381-amino-acid chain; its full sequence is Succinyl-diaminopimelate desuccinylase (381 aa).

His-72 is a binding site for Zn(2+). Asp-74 is an active-site residue. Asp-103 provides a ligand contact to Zn(2+). Residue Glu-133 is the Proton acceptor of the active site. Positions 134, 163, and 348 each coordinate Zn(2+).

This sequence belongs to the peptidase M20A family. DapE subfamily. As to quaternary structure, homodimer. Zn(2+) is required as a cofactor. Co(2+) serves as cofactor.

The catalysed reaction is N-succinyl-(2S,6S)-2,6-diaminopimelate + H2O = (2S,6S)-2,6-diaminopimelate + succinate. It functions in the pathway amino-acid biosynthesis; L-lysine biosynthesis via DAP pathway; LL-2,6-diaminopimelate from (S)-tetrahydrodipicolinate (succinylase route): step 3/3. Its function is as follows. Catalyzes the hydrolysis of N-succinyl-L,L-diaminopimelic acid (SDAP), forming succinate and LL-2,6-diaminopimelate (DAP), an intermediate involved in the bacterial biosynthesis of lysine and meso-diaminopimelic acid, an essential component of bacterial cell walls. This is Succinyl-diaminopimelate desuccinylase from Anaplasma marginale (strain Florida).